We begin with the raw amino-acid sequence, 513 residues long: Sterol 14-alpha demethylase (513 aa).

Residues 10 to 30 (FTLVSAYAAAGLLAIIVLNLL) form a helical membrane-spanning segment. Residues Asn-37 and Asn-406 are each glycosylated (N-linked (GlcNAc...) asparagine). Residue Cys-453 coordinates heme.

The protein belongs to the cytochrome P450 family. Heme is required as a cofactor.

The protein localises to the endoplasmic reticulum membrane. The enzyme catalyses a 14alpha-methyl steroid + 3 reduced [NADPH--hemoprotein reductase] + 3 O2 = a Delta(14) steroid + formate + 3 oxidized [NADPH--hemoprotein reductase] + 4 H2O + 4 H(+). The catalysed reaction is a 14alpha-methyl steroid + reduced [NADPH--hemoprotein reductase] + O2 = a 14alpha-hydroxymethyl steroid + oxidized [NADPH--hemoprotein reductase] + H2O + H(+). It catalyses the reaction a 14alpha-hydroxymethyl steroid + reduced [NADPH--hemoprotein reductase] + O2 = a 14alpha-formyl steroid + oxidized [NADPH--hemoprotein reductase] + 2 H2O + H(+). It carries out the reaction a 14alpha-formyl steroid + reduced [NADPH--hemoprotein reductase] + O2 = a Delta(14) steroid + formate + oxidized [NADPH--hemoprotein reductase] + H2O + 2 H(+). The enzyme catalyses lanosterol + 3 reduced [NADPH--hemoprotein reductase] + 3 O2 = 4,4-dimethyl-5alpha-cholesta-8,14,24-trien-3beta-ol + formate + 3 oxidized [NADPH--hemoprotein reductase] + 4 H2O + 4 H(+). The catalysed reaction is lanosterol + reduced [NADPH--hemoprotein reductase] + O2 = 32-hydroxylanosterol + oxidized [NADPH--hemoprotein reductase] + H2O + H(+). It catalyses the reaction 32-hydroxylanosterol + reduced [NADPH--hemoprotein reductase] + O2 = 32-oxolanosterol + oxidized [NADPH--hemoprotein reductase] + 2 H2O + H(+). It carries out the reaction 32-oxolanosterol + reduced [NADPH--hemoprotein reductase] + O2 = 4,4-dimethyl-5alpha-cholesta-8,14,24-trien-3beta-ol + formate + oxidized [NADPH--hemoprotein reductase] + H2O + 2 H(+). The enzyme catalyses eburicol + 3 reduced [NADPH--hemoprotein reductase] + 3 O2 = 14-demethyleburicol + formate + 3 oxidized [NADPH--hemoprotein reductase] + 4 H2O + 4 H(+). The catalysed reaction is eburicol + reduced [NADPH--hemoprotein reductase] + O2 = 32-hydroxyeburicol + oxidized [NADPH--hemoprotein reductase] + H2O + H(+). It catalyses the reaction 32-hydroxyeburicol + reduced [NADPH--hemoprotein reductase] + O2 = 32-oxoeburicol + oxidized [NADPH--hemoprotein reductase] + 2 H2O + H(+). It carries out the reaction 32-oxoeburicol + reduced [NADPH--hemoprotein reductase] + O2 = 14-demethyleburicol + formate + oxidized [NADPH--hemoprotein reductase] + H2O + 2 H(+). The protein operates within steroid biosynthesis; sterol biosynthesis. Sterol 14alpha-demethylase, encoded by cyp51A, cyp51B and cyp51C, that plays a critical role in the third module of ergosterol biosynthesis pathway, being ergosterol the major sterol component in fungal membranes that participates in a variety of functions. The third module or late pathway involves the ergosterol synthesis itself through consecutive reactions that mainly occur in the endoplasmic reticulum (ER) membrane. In filamentous fungi, during the initial step of this module, lanosterol (lanosta-8,24-dien-3beta-ol) can be metabolized to eburicol. Sterol 14alpha-demethylase catalyzes the three-step oxidative removal of the 14alpha-methyl group (C-32) of both these sterols in the form of formate, and converts eburicol and lanosterol to 14-demethyleburicol (4,4,24-trimethylergosta-8,14,24(28)-trienol) and 4,4-dimethyl-5alpha-cholesta-8,14,24-trien-3beta-ol, respectively, which are further metabolized by other enzymes in the pathway to ergosterol. Can also use substrates not intrinsic to fungi, such as 24,25-dihydrolanosterol (DHL), producing 4,4'-dimethyl-8,14-cholestadien-3-beta-ol, but at lower rates than the endogenous substrates. In terms of biological role, as a target of azole drugs, plays a crucial role in azole susceptibility. This chain is Sterol 14-alpha demethylase, found in Aspergillus flavus (strain ATCC 200026 / FGSC A1120 / IAM 13836 / NRRL 3357 / JCM 12722 / SRRC 167).